We begin with the raw amino-acid sequence, 248 residues long: tRNA N(3)-methylcytidine methyltransferase trm141 (248 aa).

6 residues coordinate S-adenosyl-L-methionine: W23, Y27, G63, D86, D112, and I133.

It belongs to the methyltransferase superfamily. METL family.

Its subcellular location is the cytoplasm. The protein resides in the nucleus. The enzyme catalyses cytidine(32) in tRNA(Ser) + S-adenosyl-L-methionine = N(3)-methylcytidine(32) in tRNA(Ser) + S-adenosyl-L-homocysteine + H(+). Its function is as follows. S-adenosyl-L-methionine-dependent methyltransferase that mediates N(3)-methylcytidine modification of residue 32 of the tRNA anticodon loop of tRNA(Ser). N(3)-methylcytidine methylation by trm141 requires the formation of N(6)-dimethylallyladenosine(37) (i6A37) by tit1 as prerequisite. Does not catalyze N(3)-methylcytidine modification of tRNA(Thr). The sequence is that of tRNA N(3)-methylcytidine methyltransferase trm141 from Schizosaccharomyces pombe (strain 972 / ATCC 24843) (Fission yeast).